Consider the following 673-residue polypeptide: Potassium-transporting ATPase ATP-binding subunit (673 aa).

Transmembrane regions (helical) follow at residues 34-54 (IMFV…YPDL), 65-85 (VFSI…SEAL), 216-236 (IALF…ILTM), and 253-273 (IALA…AIGI). Catalysis depends on Asp-304, which acts as the 4-aspartylphosphate intermediate. ATP-binding positions include Asp-341, Glu-345, 370–377 (FTAETRMS), and Lys-388. Asp-511 and Asp-515 together coordinate Mg(2+). The next 3 helical transmembrane spans lie at 581–601 (FAIL…LNIM), 609–629 (AVLS…PIAM), and 649–669 (VYGL…DLII).

Belongs to the cation transport ATPase (P-type) (TC 3.A.3) family. Type IA subfamily. The system is composed of three essential subunits: KdpA, KdpB and KdpC.

It localises to the cell membrane. It carries out the reaction K(+)(out) + ATP + H2O = K(+)(in) + ADP + phosphate + H(+). Part of the high-affinity ATP-driven potassium transport (or Kdp) system, which catalyzes the hydrolysis of ATP coupled with the electrogenic transport of potassium into the cytoplasm. This subunit is responsible for energy coupling to the transport system and for the release of the potassium ions to the cytoplasm. The chain is Potassium-transporting ATPase ATP-binding subunit from Staphylococcus epidermidis (strain ATCC 35984 / DSM 28319 / BCRC 17069 / CCUG 31568 / BM 3577 / RP62A).